The following is a 289-amino-acid chain: uncharacterized protein (289 aa).

Residues 80–96 (PLNESRTSFKNIPQSRN) show a composition bias toward polar residues. Disordered regions lie at residues 80–101 (PLNE…PRDY) and 136–157 (PREN…RMRE).

This is an uncharacterized protein from Acanthamoeba polyphaga (Amoeba).